The primary structure comprises 464 residues: MEHHNSHLLPGGSEKMYYIAHQQPMLRNEDDNYQEGYFIRPDPASLIYNTTALPADDEGSNYGYGSTTTLSGLQFETYNITVMMNFSCDDYDLLSEDMWSSAYFKIIVYMLYIPIFIFALIGNGTVCYIVYSTPRMRTVTNYFIASLAIGDILMSFFCVPSSFISLFILNYWPFGLALCHFVNYSQAVSVLVSAYTLVAISIDRYIAIMWPLKPRITKRYATFIIAGVWFIALATALPIPIVSGLDIPMSPWHTKCEKYICREMWPSRTQEYYYTLSLFALQFVVPLGVLIFTYARITIRVWAKRPPGEAETNRDQRMARSKRKMVKMMLTVVIVFTCCWLPFNILQLLLNDEEFAHWDPLPYVWFAFHWLAMSHCCYNPIIYCYMNARFRSGFVQLMHRMPGLRRWCCLRSVGDRMNATSGTGPALPLNRMNTSTTYISARRKPRATSLRANPLSCGETSPLR.

The Extracellular segment spans residues 1–105 (MEHHNSHLLP…EDMWSSAYFK (105 aa)). N-linked (GlcNAc...) asparagine glycans are attached at residues N49, N79, and N85. A helical transmembrane segment spans residues 106–126 (IIVYMLYIPIFIFALIGNGTV). Topologically, residues 127–148 (CYIVYSTPRMRTVTNYFIASLA) are cytoplasmic. The helical transmembrane segment at 149–169 (IGDILMSFFCVPSSFISLFIL) threads the bilayer. Topologically, residues 170-189 (NYWPFGLALCHFVNYSQAVS) are extracellular. N183 is a glycosylation site (N-linked (GlcNAc...) asparagine). The helical transmembrane segment at 190–210 (VLVSAYTLVAISIDRYIAIMW) threads the bilayer. Topologically, residues 211-221 (PLKPRITKRYA) are cytoplasmic. The chain crosses the membrane as a helical span at residues 222-242 (TFIIAGVWFIALATALPIPIV). The Extracellular portion of the chain corresponds to 243–274 (SGLDIPMSPWHTKCEKYICREMWPSRTQEYYY). A helical transmembrane segment spans residues 275–295 (TLSLFALQFVVPLGVLIFTYA). Over 296–329 (RITIRVWAKRPPGEAETNRDQRMARSKRKMVKMM) the chain is Cytoplasmic. A helical membrane pass occupies residues 330–350 (LTVVIVFTCCWLPFNILQLLL). Residues 351–363 (NDEEFAHWDPLPY) are Extracellular-facing. A helical membrane pass occupies residues 364–384 (VWFAFHWLAMSHCCYNPIIYC). At 385-464 (YMNARFRSGF…LSCGETSPLR (80 aa)) the chain is on the cytoplasmic side.

The protein belongs to the G-protein coupled receptor 1 family.

Its subcellular location is the cell membrane. Receptor for the neuropeptides RYamide-1 and RYamide-2. The activity of this receptor is mediated by G proteins which activate a phosphatidyl-inositol-calcium second messenger system. RYamide signaling may suppress feeding behavior. The protein is RYamide receptor of Drosophila melanogaster (Fruit fly).